A 1033-amino-acid polypeptide reads, in one-letter code: E3 ubiquitin-protein ligase Topors (1033 aa).

The segment covering 1–10 has biased composition (pro residues); that stretch reads MGSQPPPPGS. The disordered stretch occupies residues 1 to 36; sequence MGSQPPPPGSPLSREEGEAPPLVPAEEGRRRSRRVR. Residues 52–376 form a required for DNA-binding region; sequence ELASNGPAVP…MAAFDQHANY (325 aa). Residues K74, K77, K84, and K89 each participate in a glycyl lysine isopeptide (Lys-Gly) (interchain with G-Cter in SUMO2) cross-link. Position 99 is a phosphoserine (S99). The segment at 104 to 143 adopts an RING-type zinc-finger fold; sequence CPICLDRFDNVSYLDRCLHKFCFRCVQEWSKNKAECPLCK. A Glycyl lysine isopeptide (Lys-Gly) (interchain with G-Cter in SUMO2) cross-link involves residue K160. Position 196 is a phosphoserine (S196). Residue K251 forms a Glycyl lysine isopeptide (Lys-Gly) (interchain with G-Cter in SUMO2) linkage. Disordered regions lie at residues 414–477 and 496–692; these read QAPW…SSSD and VELS…RYYL. Positions 434-444 are enriched in low complexity; it reads VGVSSLLNSSD. The segment at 438-574 is sumoylation and localization to discrete nuclear foci; it reads SLLNSSDSSD…RSTSLPAPRD (137 aa). The segment at 438–654 is interaction with SUMO1; sequence SLLNSSDSSD…RSRTRDSSWS (217 aa). Positions 455-464 are enriched in polar residues; sequence TTSQIQGVQT. The segment at 457–731 is interaction with p53/TP53; that stretch reads SQIQGVQTND…RRTLSRAHYS (275 aa). The tract at residues 457-879 is interaction with TOP1; it reads SQIQGVQTND…GKATDTSKHH (423 aa). Residues 465 to 477 are compositionally biased toward low complexity; it reads NDDVNNDSDSSSD. S500 carries the post-translational modification Phosphoserine. Residues 507-518 show a composition bias toward basic and acidic residues; it reads PYEKVETVKTQE. Low complexity predominate over residues 522 to 535; the sequence is SYSSGDSDVSRASS. The span at 540-566 shows a compositional bias: basic and acidic residues; it reads LGKDEQMSKSHCDSDTRISSKKEEKRS. Residue K561 forms a Glycyl lysine isopeptide (Lys-Gly) (interchain with G-Cter in SUMO) linkage. S585 carries the post-translational modification Phosphoserine. Composition is skewed to basic residues over residues 613–629 and 637–647; these read RNHR…KRSR and PRARKDKKRSR. A compositionally biased stretch (low complexity) spans 654–669; that stretch reads SRRSQTLSLSSGSTSR. K701 is covalently cross-linked (Glycyl lysine isopeptide (Lys-Gly) (interchain with G-Cter in SUMO2)). Disordered stretches follow at residues 713 to 934 and 970 to 1033; these read RDGY…PIQD and TVEN…CDVS. S718 is subject to Phosphoserine; by PLK1. A compositionally biased stretch (basic residues) spans 721 to 730; it reads RRRTLSRAHY. Positions 731–747 are enriched in polar residues; that stretch reads SRQSSSPEFRIQSFSER. S734 is modified (phosphoserine). Over residues 770–780 the composition is skewed to low complexity; the sequence is SVSSNRSRTTS. The segment covering 815 to 837 has biased composition (basic and acidic residues); that stretch reads FTSKGKDSHYQKSKLDGSYKNES. Residues K818 and K834 each participate in a glycyl lysine isopeptide (Lys-Gly) (interchain with G-Cter in SUMO2) cross-link. The segment covering 851 to 860 has biased composition (basic residues); sequence KHKRRRRRTR. Residues 851–914 are interaction with UBE2I; sequence KHKRRRRRTR…ITIDSDSDGE (64 aa). Phosphoserine is present on residues S861 and S863. Residues 877-894 show a composition bias toward basic residues; it reads KHHKKKKKKHKKKHKKHH. 5 positions are modified to phosphoserine: S909, S911, S999, S1016, and S1025. Residues 992-1008 are compositionally biased toward polar residues; it reads TFASDLESQSSNVSIQA.

As to quaternary structure, interacts with TOP1. Interacts with the SUMO1 conjugating enzyme UBE2I. Interacts with SUMO1. Interacts with NKX3-1; polyubiquitinates NKX3-1 and induces its proteasomal degradation. Interacts with SIN3A; sumoylates SIN3A. Interacts with IKBKE; induced by DNA damage. Interacts with p53/TP53. Interacts with PARK7/DJ-1. Phosphorylation at Ser-99 regulates the E3 ubiquitin-protein ligase activity but not the SUMO1-protein ligase activity. Phosphorylation at Ser-718 increases the E3 ubiquitin-protein ligase activity versus the E3 SUMO1-protein ligase activity resulting in increased p53/TP53 ubiquitination and degradation. In terms of processing, sumoylated.

The protein localises to the nucleus. It is found in the PML body. It catalyses the reaction S-ubiquitinyl-[E2 ubiquitin-conjugating enzyme]-L-cysteine + [acceptor protein]-L-lysine = [E2 ubiquitin-conjugating enzyme]-L-cysteine + N(6)-ubiquitinyl-[acceptor protein]-L-lysine.. Its function is as follows. Functions as an E3 ubiquitin-protein ligase and as a E3 SUMO1-protein ligase. Probable tumor suppressor involved in cell growth, cell proliferation and apoptosis that regulates p53/TP53 stability through ubiquitin-dependent degradation. May regulate chromatin modification through sumoylation of several chromatin modification-associated proteins. May be involved in DNA-damage-induced cell death through IKBKE sumoylation. In Mus musculus (Mouse), this protein is E3 ubiquitin-protein ligase Topors (Topors).